A 286-amino-acid polypeptide reads, in one-letter code: MSIVGRNAILNLRISLCPLFMGKRSFVSSPVSNSAKAVKFLKAQRRKQKNEAKQATLKASTDKVDPVLGRADTPFITRIMAELKEPLVLSKGYNIEEVDKFLAAIESAKRERAELSGLNTEVVGIEDIEKLEDRREAILRILSMRNSENKNAIKMAVELARKEFERFPGDTGSSEVQAACMTVRIQNMANHIKEHRKDFANTRNLRILVQQRQAILRYLKRDNPEKYYWTIQKLGLNDAAITDEFNMDRRYMQDYEFFGDKILIRDSKKVANQKRKEIRKQKRATF.

A mitochondrion-targeting transit peptide spans 1–33 (MSIVGRNAILNLRISLCPLFMGKRSFVSSPVSN).

Belongs to the universal ribosomal protein uS15 family. As to quaternary structure, component of the mitochondrial small ribosomal subunit (mt-SSU). Mature yeast 74S mitochondrial ribosomes consist of a small (37S) and a large (54S) subunit. The 37S small subunit contains a 15S ribosomal RNA (15S mt-rRNA) and 34 different proteins. The 54S large subunit contains a 21S rRNA (21S mt-rRNA) and 46 different proteins. Post-translationally, the precursor is processed in two steps involving mitochondrial intermediate peptidase (MIP) and mitochondrial processing peptidase (MPP).

The protein resides in the mitochondrion. Its function is as follows. Component of the mitochondrial ribosome (mitoribosome), a dedicated translation machinery responsible for the synthesis of mitochondrial genome-encoded proteins, including at least some of the essential transmembrane subunits of the mitochondrial respiratory chain. The mitoribosomes are attached to the mitochondrial inner membrane and translation products are cotranslationally integrated into the membrane. The protein is Small ribosomal subunit protein uS15m (MRPS28) of Saccharomyces cerevisiae (strain ATCC 204508 / S288c) (Baker's yeast).